The following is a 311-amino-acid chain: MRFKYVASKYSCVTQTQTQLIDGTEVAASIRSDLISSVTRIVNTGTTPQLATVLMNDDPASQTYVSMKHDDCEEVGIATRDITIDPEAPAAELFDTVDELNADSSVHGILVQMPLPDHVDEREVLRRIDPKKDVDGFHPENVGRLVAGQPRYKPCTPHGIQKLLIAADIETEGANAVVIGRSNIVGKPMANLLIQKADAGNATVTTCHSRTNNLASKTRDADIIIAAAGVPEMIDGDMISTGTVVIDVGINRVETENGSELVGDVEFESAAKKADAITPVPGGVGPMTRAMLLWNTVKATAIATDTSIELP.

NADP(+) contacts are provided by residues 180–182 (GRS), serine 209, and isoleucine 250.

This sequence belongs to the tetrahydrofolate dehydrogenase/cyclohydrolase family. As to quaternary structure, homodimer.

It catalyses the reaction (6R)-5,10-methylene-5,6,7,8-tetrahydrofolate + NADP(+) = (6R)-5,10-methenyltetrahydrofolate + NADPH. The catalysed reaction is (6R)-5,10-methenyltetrahydrofolate + H2O = (6R)-10-formyltetrahydrofolate + H(+). Its pathway is one-carbon metabolism; tetrahydrofolate interconversion. Its function is as follows. Catalyzes the oxidation of 5,10-methylenetetrahydrofolate to 5,10-methenyltetrahydrofolate and then the hydrolysis of 5,10-methenyltetrahydrofolate to 10-formyltetrahydrofolate. The chain is Bifunctional protein FolD from Haloquadratum walsbyi (strain DSM 16790 / HBSQ001).